Reading from the N-terminus, the 119-residue chain is Large ribosomal subunit protein bL20 (119 aa).

This sequence belongs to the bacterial ribosomal protein bL20 family.

Its function is as follows. Binds directly to 23S ribosomal RNA and is necessary for the in vitro assembly process of the 50S ribosomal subunit. It is not involved in the protein synthesizing functions of that subunit. This chain is Large ribosomal subunit protein bL20, found in Geobacillus kaustophilus (strain HTA426).